Here is a 172-residue protein sequence, read N- to C-terminus: Macro domain-containing protein lp_3408 (172 aa).

Residues 1 to 171 enclose the Macro domain; sequence MVEIKVIHGD…VFSTALAALT (171 aa).

The protein belongs to the MacroD-type family.

The polypeptide is Macro domain-containing protein lp_3408 (Lactiplantibacillus plantarum (strain ATCC BAA-793 / NCIMB 8826 / WCFS1) (Lactobacillus plantarum)).